We begin with the raw amino-acid sequence, 612 residues long: Dihydroxy-acid dehydratase (612 aa).

Residue Asp-81 participates in Mg(2+) binding. Cys-122 is a binding site for [2Fe-2S] cluster. The Mg(2+) site is built by Asp-123 and Lys-124. N6-carboxylysine is present on Lys-124. A [2Fe-2S] cluster-binding site is contributed by Cys-193. Residue Glu-489 participates in Mg(2+) binding. The Proton acceptor role is filled by Ser-515.

The protein belongs to the IlvD/Edd family. In terms of assembly, homodimer. [2Fe-2S] cluster is required as a cofactor. Mg(2+) serves as cofactor.

It catalyses the reaction (2R)-2,3-dihydroxy-3-methylbutanoate = 3-methyl-2-oxobutanoate + H2O. The enzyme catalyses (2R,3R)-2,3-dihydroxy-3-methylpentanoate = (S)-3-methyl-2-oxopentanoate + H2O. Its pathway is amino-acid biosynthesis; L-isoleucine biosynthesis; L-isoleucine from 2-oxobutanoate: step 3/4. The protein operates within amino-acid biosynthesis; L-valine biosynthesis; L-valine from pyruvate: step 3/4. In terms of biological role, functions in the biosynthesis of branched-chain amino acids. Catalyzes the dehydration of (2R,3R)-2,3-dihydroxy-3-methylpentanoate (2,3-dihydroxy-3-methylvalerate) into 2-oxo-3-methylpentanoate (2-oxo-3-methylvalerate) and of (2R)-2,3-dihydroxy-3-methylbutanoate (2,3-dihydroxyisovalerate) into 2-oxo-3-methylbutanoate (2-oxoisovalerate), the penultimate precursor to L-isoleucine and L-valine, respectively. The protein is Dihydroxy-acid dehydratase of Stenotrophomonas maltophilia (strain R551-3).